Here is a 232-residue protein sequence, read N- to C-terminus: MLRSLFRRLFKYLLWFMAASVVLVAVLRWVPPPGTMVMVERKVGSWVDGQPIDLQRDWRSWEQLPDSLKVAVIAGEDQHFAEHHGFDLPAIQQALAHNERGGSIRGASTLSQQVAKNVFLWSGRSWLRKGLEAWFTLLIETLWTKQRILEVYLNSAEWGPGVFGAQAAARYHFGLDAERLSRTQASQLAAVLPSPLKWSAARPGPYVRQRAAWIRQQMWQLGGDDYLLRLER.

Residues 12-31 form a helical membrane-spanning segment; that stretch reads YLLWFMAASVVLVAVLRWVP.

The protein belongs to the glycosyltransferase 51 family.

Its subcellular location is the cell inner membrane. It carries out the reaction [GlcNAc-(1-&gt;4)-Mur2Ac(oyl-L-Ala-gamma-D-Glu-L-Lys-D-Ala-D-Ala)](n)-di-trans,octa-cis-undecaprenyl diphosphate + beta-D-GlcNAc-(1-&gt;4)-Mur2Ac(oyl-L-Ala-gamma-D-Glu-L-Lys-D-Ala-D-Ala)-di-trans,octa-cis-undecaprenyl diphosphate = [GlcNAc-(1-&gt;4)-Mur2Ac(oyl-L-Ala-gamma-D-Glu-L-Lys-D-Ala-D-Ala)](n+1)-di-trans,octa-cis-undecaprenyl diphosphate + di-trans,octa-cis-undecaprenyl diphosphate + H(+). It participates in cell wall biogenesis; peptidoglycan biosynthesis. Its function is as follows. Peptidoglycan polymerase that catalyzes glycan chain elongation from lipid-linked precursors. The protein is Biosynthetic peptidoglycan transglycosylase of Pseudomonas aeruginosa (strain ATCC 15692 / DSM 22644 / CIP 104116 / JCM 14847 / LMG 12228 / 1C / PRS 101 / PAO1).